A 160-amino-acid chain; its full sequence is Transcriptional repressor NrdR (160 aa).

A zinc finger spans residues 3 to 34 (CPRCHHNNSRVIDSRQADDGRAIRRRRECENC). In terms of domain architecture, ATP-cone spans 49 to 139 (LLVIKKNGDR…VYRQFKDMSV (91 aa)).

Belongs to the NrdR family. Zn(2+) is required as a cofactor.

Its function is as follows. Negatively regulates transcription of bacterial ribonucleotide reductase nrd genes and operons by binding to NrdR-boxes. The sequence is that of Transcriptional repressor NrdR from Enterococcus faecalis (strain ATCC 700802 / V583).